Reading from the N-terminus, the 476-residue chain is Adenosylhomocysteinase (476 aa).

Residues Thr-67, Asp-142, and Glu-202 each contribute to the substrate site. NAD(+) is bound at residue 203–205; it reads TTT. Substrate contacts are provided by Lys-232 and Asp-236. NAD(+) contacts are provided by residues Asn-237, 266–271, Glu-289, Asn-324, 345–347, and Asn-390; these read GYGDVG and IGH.

The protein belongs to the adenosylhomocysteinase family. Requires NAD(+) as cofactor.

It is found in the cytoplasm. It catalyses the reaction S-adenosyl-L-homocysteine + H2O = L-homocysteine + adenosine. It functions in the pathway amino-acid biosynthesis; L-homocysteine biosynthesis; L-homocysteine from S-adenosyl-L-homocysteine: step 1/1. In terms of biological role, may play a key role in the regulation of the intracellular concentration of adenosylhomocysteine. In Synechococcus sp. (strain CC9902), this protein is Adenosylhomocysteinase.